The sequence spans 461 residues: Probable tubulin polyglutamylase TTLL9 (461 aa).

Polar residues predominate over residues 1 to 10; that stretch reads MSRQKNQNSK. The tract at residues 1–20 is disordered; sequence MSRQKNQNSKGHGVSKGKER. The TTL domain occupies 22 to 402; the sequence is QRTLIRFKTT…EARLTGKEKR (381 aa). Residues Lys149 and 155-156 each bind ATP; that span reads QG. Gln155 contributes to the a protein binding site. Residues 172–208 form a disordered region; it reads RKGTSGKKPTGVETQPARANMNPSGSHDTRSSDDQKD. Basic and acidic residues predominate over residues 198-208; that stretch reads HDTRSSDDQKD. ATP-binding positions include 218 to 221 and 231 to 233; these read QRYV and KFD. Residue Arg257 participates in L-glutamate binding. An ATP-binding site is contributed by 276-277; the sequence is TN. Lys294 contacts L-glutamate. Positions 348, 361, and 363 each coordinate Mg(2+). Lys379 contacts L-glutamate.

Belongs to the tubulin--tyrosine ligase family. Requires Mg(2+) as cofactor. In terms of tissue distribution, highly expressed in brain and testis. Expressed in heart, kidney and lung. In the brain, expressed in ependymal cilia, cortex, corpus callosum and striatum. In the testis, specifically expressed in the seminiferous tubules.

It is found in the cytoplasm. It localises to the cytoskeleton. The protein localises to the cilium basal body. The protein resides in the flagellum axoneme. It carries out the reaction (L-glutamyl)(n)-gamma-L-glutamyl-L-glutamyl-[protein] + L-glutamate + ATP = (L-glutamyl)(n+1)-gamma-L-glutamyl-L-glutamyl-[protein] + ADP + phosphate + H(+). Functionally, probable tubulin polyglutamylase that generates side chains of glutamate on the gamma-carboxyl group of specific glutamate residues within the C-terminal tail of target proteins. Similar to TTLL1, may acquire enzymatic activity only in complex with other proteins as it is most likely lacking domains important for autonomous activity. Mediates tubulin polyglutamylation which induces establishment of microtubule heterogeneity in sperm flagella, thereby playing a role in normal motile flagella axoneme structure and sperm flagella beating pattern. This chain is Probable tubulin polyglutamylase TTLL9, found in Mus musculus (Mouse).